Consider the following 256-residue polypeptide: Alcohol dehydrogenase (256 aa).

12–35 contacts NAD(+); that stretch reads FVAGLGGIGLDTSKELVKRDLKNL. Substrate is bound at residue S140. The active-site Proton acceptor is the Y153.

The protein belongs to the short-chain dehydrogenases/reductases (SDR) family. Homodimer.

The enzyme catalyses a primary alcohol + NAD(+) = an aldehyde + NADH + H(+). The catalysed reaction is a secondary alcohol + NAD(+) = a ketone + NADH + H(+). This Drosophila orena (Fruit fly) protein is Alcohol dehydrogenase (Adh).